Reading from the N-terminus, the 181-residue chain is MSAARESHPHGVKRSASPDDDLGSSNWEAADLGNEERKQKFLRLMGAGKKEHTGRLVIGDHKSTSHFRTGEEDKKINEELESQYQQSMDSKLSGRYRRHCGLGFSEVEDHDGEGDVAGDDDEDDSPDAESPDDSDSDSESEKEESAEELHAAEHPDDTEDPKSKKDAKSNYKMMFVKSSGS.

Residues 1-181 (MSAARESHPH…KMMFVKSSGS (181 aa)) are disordered. Residue K13 forms a Glycyl lysine isopeptide (Lys-Gly) (interchain with G-Cter in SUMO2) linkage. Phosphoserine is present on residues S15 and S17. The segment covering 48–78 (GKKEHTGRLVIGDHKSTSHFRTGEEDKKINE) has biased composition (basic and acidic residues). Residue K62 forms a Glycyl lysine isopeptide (Lys-Gly) (interchain with G-Cter in SUMO2) linkage. A Phosphoserine modification is found at S63. A Glycyl lysine isopeptide (Lys-Gly) (interchain with G-Cter in SUMO2) cross-link involves residue K75. S87, S125, and S145 each carry phosphoserine. The segment covering 106–146 (EVEDHDGEGDVAGDDDEDDSPDAESPDDSDSDSESEKEESA) has biased composition (acidic residues). Positions 147 to 169 (EELHAAEHPDDTEDPKSKKDAKS) are enriched in basic and acidic residues. N6-acetyllysine is present on residues K172 and K177.

Belongs to the SMAP family.

The protein is Small acidic protein (Smap) of Mus musculus (Mouse).